We begin with the raw amino-acid sequence, 476 residues long: Aspartyl/glutamyl-tRNA(Asn/Gln) amidotransferase subunit B (476 aa).

It belongs to the GatB/GatE family. GatB subfamily. As to quaternary structure, heterotrimer of A, B and C subunits.

It carries out the reaction L-glutamyl-tRNA(Gln) + L-glutamine + ATP + H2O = L-glutaminyl-tRNA(Gln) + L-glutamate + ADP + phosphate + H(+). The catalysed reaction is L-aspartyl-tRNA(Asn) + L-glutamine + ATP + H2O = L-asparaginyl-tRNA(Asn) + L-glutamate + ADP + phosphate + 2 H(+). Its function is as follows. Allows the formation of correctly charged Asn-tRNA(Asn) or Gln-tRNA(Gln) through the transamidation of misacylated Asp-tRNA(Asn) or Glu-tRNA(Gln) in organisms which lack either or both of asparaginyl-tRNA or glutaminyl-tRNA synthetases. The reaction takes place in the presence of glutamine and ATP through an activated phospho-Asp-tRNA(Asn) or phospho-Glu-tRNA(Gln). The chain is Aspartyl/glutamyl-tRNA(Asn/Gln) amidotransferase subunit B from Listeria monocytogenes serovar 1/2a (strain ATCC BAA-679 / EGD-e).